A 349-amino-acid chain; its full sequence is Transmembrane protein 59-like (349 aa).

An N-terminal signal peptide occupies residues 1-22 (MDSVALMPLLLLLLLQPPPATP). N-linked (GlcNAc...) asparagine glycosylation occurs at N100. A helical transmembrane segment spans residues 276 to 296 (ILACCLFLSVLVMLWLSCSTL). The short motif at 347-349 (TKL) is the Microbody targeting signal element.

This sequence belongs to the TMEM59 family.

The protein resides in the golgi apparatus membrane. Functionally, modulates the O-glycosylation and complex N-glycosylation steps occurring during the Golgi maturation of APP. Inhibits APP transport to the cell surface and further shedding. In Bos taurus (Bovine), this protein is Transmembrane protein 59-like (TMEM59L).